The following is a 577-amino-acid chain: MKMVVEKTEKFDPEEVIEEFEVLTKDAGKIQEETLQKILEENGGTEYLQQWGLNGKTDSLSFKNCIPIVTHKDLEPYIHRIADGDLSPILTGKPITTISLSSGTTQGKPKFVPFNEELMESTMQIFKTSFVFRNREFPVVNGKALQFIYGSKQFKTKGGLAAGTATTNVYRNAQFKKTMKAMQTPCCSPDEVIFGPDFQQSLYCHLLCGLIFRDEVQVVSSTFAHSIVHAFRNFEQIWQELVTNIREGVLSSRVIVPSMRAAMSKLLKPDPELADTIFNKCSRLSNWYGLIPELFPNTRYIYGIMTGSMEPYLKKLRHYAGDLPLLSADYGSSEGWIGANVNPELPPELVTYAVLPNIGYFEFIPLMENLDGLEPMPVGLTEVKLGEEYEIVVTNFAGLYRYRLGDVVKIKGFHNGTPELQFICRRNLLLSINIDKNTEKDLQLAVEAAAKILSDEKLEVVDFTSHVNVSADPGHYVIFWELNGEASEEILKECCNCLDKSFVDAGYVGSRKVHAIGALELRIVKRGTFHKILDHFVGLGAAVSQFKTPRCVGPTNLSVLQILSSNVVESYFSTAFC.

Serine 99 contributes to the ATP binding site. Serine 102 contributes to the jasmonate binding site. Residues methionine 119, threonine 122, glycine 163, asparagine 168, and 331 to 336 (GSSEGW) each bind ATP. 166-170 (TTNVY) is a binding site for an L-alpha-amino acid. 328–331 (ADYG) provides a ligand contact to jasmonate. Residue 531 to 535 (KILDH) participates in an L-alpha-amino acid binding.

The protein belongs to the IAA-amido conjugating enzyme family.

The catalysed reaction is a jasmonate + an L-alpha-amino acid + ATP = a jasmonyl-L-amino acid + AMP + diphosphate + H(+). Functionally, catalyzes the synthesis of jasmonate-amino acid conjugates by adenylation. Catalyzes the conjugation of jasmonate (JA) to Ile, Leu and Val. Catalyzes the conjugation of jasmonate (JA) to Ile to mediate defense signaling and resistance to the herbivore Manduca sexta caterpillars. The chain is Jasmonoyl--L-amino acid synthetase JAR4 from Nicotiana attenuata (Coyote tobacco).